A 308-amino-acid polypeptide reads, in one-letter code: Glutaminase (308 aa).

Serine 66, asparagine 117, glutamate 161, asparagine 168, tyrosine 192, tyrosine 244, and valine 262 together coordinate substrate.

This sequence belongs to the glutaminase family. Homotetramer.

It carries out the reaction L-glutamine + H2O = L-glutamate + NH4(+). This Cronobacter sakazakii (strain ATCC BAA-894) (Enterobacter sakazakii) protein is Glutaminase.